Here is a 249-residue protein sequence, read N- to C-terminus: uncharacterized protein (249 aa).

6 residues coordinate a divalent metal cation: His-10, His-12, Glu-95, His-129, His-150, and Asp-198.

The protein belongs to the metallo-dependent hydrolases superfamily. TatD-type hydrolase family. A divalent metal cation is required as a cofactor.

This is an uncharacterized protein from Methanocaldococcus jannaschii (strain ATCC 43067 / DSM 2661 / JAL-1 / JCM 10045 / NBRC 100440) (Methanococcus jannaschii).